A 952-amino-acid polypeptide reads, in one-letter code: MKVMNPRKTNNTFMYYFVLFVCGFVLMEGCLGQNQTTEIKVGVVLDLHTSFSKLCLTSINISLSDFYKYHSDYTTRLAIHIRDSMEDVVQASSAALDLIKNEQVSAIIGPRTSMQAEFMIRLADKSQVPTITFSATCPLLTSINSPYFVRATLDDSSQVKAIAAIVKSFGWRNVVAIYVDNEFGEGILPLLTDALQDVQAFVVNRCLIPQEANDDQILKELYKLMTMQTRVFVVHMPPTLGFRFFQKAREIGMMEEGYVWLLTDGVMNLLKSNERGSSLENMQGVLGVRSHIPKSKKLKNFRLRWEKMFPKKGNDEEMNIFALRAYDSITALAMAVEKTNIKSLRYDHPIASGNNKTNLGTLGVSRYGPSLLKALSNVRFNGLAGEFELINGQLESSVFDVINIIGSEERIIGLWRPSNGIVNAKSKNTTSVLGERLGPVIWPGKSKDVPKGWQIPTNGKMLRVGIPVKKGFLEFVDAKIDPISNAMTPTGYCIEIFEAVLKKLPYSVIPKYIAFLSPDENYDEMVYQVYTGAYDAVVGDVTIVANRSLYVDFTLPYTESGVSMMVPLKDNKNTWVFLRPWSLDLWVTTACFFVFIGFIVWILEHRVNTDFRGPPHHQIGTSFWFAFSTMNFAHREKVVSNLARFVVLVWCFVVLVLIQSYTANLTSFFTVKLLQPTVTNWKDLIKFNKNIGYQRGTFVRELLKSQGFDESQLKPFGSAVECDELFSNGTITASFDEVAYIKVILSQNSSKYTMVEPSFKTAGFGFVFPKKSPLTDDVSRAILNVTQGEEMQHIENKWFKKPNNCPDLNTSLSSNHLSLSSFWGLFLIAGIASFLALLIFVANFLYEHKHTLFDDSENSFRGKLKFLVRNFDEKDIKSHMFKENAVHNVSSPITQGSSSPLTDQSTPLPRSPEQYRELELRRVSSISSGELFTTQSEQVEDEESAIIQCEGE.

The N-terminal stretch at 1–32 is a signal peptide; it reads MKVMNPRKTNNTFMYYFVLFVCGFVLMEGCLG. Residues 33 to 582 are Extracellular-facing; that stretch reads QNQTTEIKVG…NTWVFLRPWS (550 aa). Asn34, Asn60, Asn355, Asn428, and Asn546 each carry an N-linked (GlcNAc...) asparagine glycan. A helical membrane pass occupies residues 583 to 603; that stretch reads LDLWVTTACFFVFIGFIVWIL. The Cytoplasmic portion of the chain corresponds to 604-612; it reads EHRVNTDFR. Residues 613–633 form a helical membrane-spanning segment; that stretch reads GPPHHQIGTSFWFAFSTMNFA. The Cytoplasmic segment spans residues 634–637; sequence HREK. The chain crosses the membrane as a helical span at residues 638–658; the sequence is VVSNLARFVVLVWCFVVLVLI. Over 659–821 the chain is Extracellular; that stretch reads QSYTANLTSF…LSSNHLSLSS (163 aa). Asn664, Asn728, Asn748, Asn784, and Asn809 each carry an N-linked (GlcNAc...) asparagine glycan. A helical transmembrane segment spans residues 822-842; that stretch reads FWGLFLIAGIASFLALLIFVA. Over 843 to 952 the chain is Cytoplasmic; sequence NFLYEHKHTL…ESAIIQCEGE (110 aa). Over residues 889-908 the composition is skewed to polar residues; the sequence is VSSPITQGSSSPLTDQSTPL. Disordered stretches follow at residues 889–914 and 932–952; these read VSSP…SPEQ and FTTQ…CEGE.

It belongs to the glutamate-gated ion channel (TC 1.A.10.1) family. In terms of assembly, may form heteromers. In terms of tissue distribution, expressed predominantly in leaves.

It is found in the membrane. Functionally, glutamate-gated receptor that probably acts as a non-selective cation channel. May be involved in light-signal transduction and calcium homeostasis via the regulation of calcium influx into cells. This chain is Glutamate receptor 2.7 (GLR2.7), found in Arabidopsis thaliana (Mouse-ear cress).